Consider the following 352-residue polypeptide: Ion-translocating oxidoreductase complex subunit D (352 aa).

4 helical membrane passes run 20–40 (IMLL…WFFG), 42–62 (GTLV…ALVL), 89–109 (IPPL…AIIA), and 123–143 (PAMI…TSWL). Threonine 187 is modified (FMN phosphoryl threonine). A run of 5 helical transmembrane segments spans residues 214-234 (ILAG…GLWL), 242-262 (WHIP…GWLF), 267-287 (LAAP…FFIL), 301-321 (LIFG…GGYP), and 322-342 (DGVA…DYYT).

This sequence belongs to the NqrB/RnfD family. The complex is composed of six subunits: RsxA, RsxB, RsxC, RsxD, RsxE and RsxG. The cofactor is FMN.

It is found in the cell inner membrane. Part of a membrane-bound complex that couples electron transfer with translocation of ions across the membrane. Required to maintain the reduced state of SoxR. This Escherichia coli (strain ATCC 8739 / DSM 1576 / NBRC 3972 / NCIMB 8545 / WDCM 00012 / Crooks) protein is Ion-translocating oxidoreductase complex subunit D.